We begin with the raw amino-acid sequence, 549 residues long: Tight junction-associated protein 1 (549 aa).

The tract at residues 1-34 (MSSAAPAKKPYRKAPPEHRELRLEIPVSRLEQEE) is disordered. Residues 14–23 (APPEHRELRL) are compositionally biased toward basic and acidic residues. The stretch at 42–171 (MKLLQQENEE…EELNERYRLD (130 aa)) forms a coiled coil. 2 disordered regions span residues 207-226 (RSGQEVASPSPSPSSSLSPG) and 266-322 (VDMS…PLYP). Position 295 is a phosphoserine (Ser295). Positions 311–320 (YPTPSPPHPL) are enriched in pro residues. Thr313 bears the Phosphothreonine mark. 2 positions are modified to phosphoserine: Ser315 and Ser340. 3 disordered regions span residues 359-404 (EDGS…SEED), 410-429 (QRAFVDRTPPPAAVVQRTAF), and 434-549 (LPEL…TVLS). Residues 369–383 (SVPSSPASAQGSPHH) are compositionally biased toward polar residues. Positions 389–400 (PSALSAPASSAS) are enriched in low complexity. At Thr417 the chain carries Phosphothreonine. Ser483 bears the Phosphoserine mark. The span at 485-498 (EEERQSLLPDKEGT) shows a compositional bias: basic and acidic residues. The span at 522–534 (RSPKRMGVHHLHR) shows a compositional bias: basic residues. Ser537 is subject to Phosphoserine. A compositionally biased stretch (polar residues) spans 538-549 (LTQAQEQGTVLS).

In terms of assembly, interacts with DLG1. Interacts with ARF6 (GTP-bound form). In terms of tissue distribution, widely expressed including in adult thymus, heart, lung, liver, small intestine, kidney, spleen, testis and skeletal muscle and in embryonic brain but not detected in adult brain (at protein level).

Its subcellular location is the golgi apparatus. The protein resides in the trans-Golgi network. It is found in the cell junction. It localises to the tight junction. The protein localises to the cell membrane. In terms of biological role, plays a role in regulating the structure of the Golgi apparatus. This chain is Tight junction-associated protein 1, found in Mus musculus (Mouse).